A 253-amino-acid polypeptide reads, in one-letter code: GTP cyclohydrolase 1 type 2 homolog (253 aa).

Residues H64, H65, D101, H222, and E226 each coordinate a divalent metal cation.

It belongs to the GTP cyclohydrolase I type 2/NIF3 family. Homohexamer.

This chain is GTP cyclohydrolase 1 type 2 homolog, found in Halobacterium salinarum (strain ATCC 700922 / JCM 11081 / NRC-1) (Halobacterium halobium).